Here is a 377-residue protein sequence, read N- to C-terminus: Chaperone protein DnaJ (377 aa).

The J domain maps to 5-70; it reads DYYEILGVER…EKRAAYDQYG (66 aa). The segment at 134–212 adopts a CR-type zinc-finger fold; it reads GITKDIQIQT…CHGDGRVHKT (79 aa). Zn(2+) is bound by residues C147, C150, C164, C167, C186, C189, C200, and C203. 4 CXXCXGXG motif repeats span residues 147–154, 164–171, 186–193, and 200–207; these read CDHCNGSG, CPTCHGHG, CPHCHGTG, and CKKCHGDG.

Belongs to the DnaJ family. Homodimer. Zn(2+) serves as cofactor.

Its subcellular location is the cytoplasm. In terms of biological role, participates actively in the response to hyperosmotic and heat shock by preventing the aggregation of stress-denatured proteins and by disaggregating proteins, also in an autonomous, DnaK-independent fashion. Unfolded proteins bind initially to DnaJ; upon interaction with the DnaJ-bound protein, DnaK hydrolyzes its bound ATP, resulting in the formation of a stable complex. GrpE releases ADP from DnaK; ATP binding to DnaK triggers the release of the substrate protein, thus completing the reaction cycle. Several rounds of ATP-dependent interactions between DnaJ, DnaK and GrpE are required for fully efficient folding. Also involved, together with DnaK and GrpE, in the DNA replication of plasmids through activation of initiation proteins. This is Chaperone protein DnaJ from Actinobacillus succinogenes (strain ATCC 55618 / DSM 22257 / CCUG 43843 / 130Z).